The chain runs to 184 residues: Protein GrpE (184 aa).

Positions 1–26 (MANEQNEQAQDIQNEQVEQSNEQTQA) are enriched in polar residues. The interval 1–34 (MANEQNEQAQDIQNEQVEQSNEQTQAEGVEQAND) is disordered.

This sequence belongs to the GrpE family. Homodimer.

The protein resides in the cytoplasm. Its function is as follows. Participates actively in the response to hyperosmotic and heat shock by preventing the aggregation of stress-denatured proteins, in association with DnaK and GrpE. It is the nucleotide exchange factor for DnaK and may function as a thermosensor. Unfolded proteins bind initially to DnaJ; upon interaction with the DnaJ-bound protein, DnaK hydrolyzes its bound ATP, resulting in the formation of a stable complex. GrpE releases ADP from DnaK; ATP binding to DnaK triggers the release of the substrate protein, thus completing the reaction cycle. Several rounds of ATP-dependent interactions between DnaJ, DnaK and GrpE are required for fully efficient folding. The sequence is that of Protein GrpE from Acinetobacter baumannii (strain AB307-0294).